Reading from the N-terminus, the 318-residue chain is Protein disulfide-isomerase MPD1 (318 aa).

The N-terminal stretch at 1 to 21 (MLFLNIIKLLLGLFIMNEVKA) is a signal peptide. The region spanning 22–158 (QNFYDSDPHI…SLSRIRSYVK (137 aa)) is the Thioredoxin domain. An N-linked (GlcNAc...) asparagine glycan is attached at Asn-47. Cys-59 and Cys-62 form a disulfide bridge. An N-linked (GlcNAc...) asparagine glycan is attached at Asn-307. The short motif at 315–318 (HDEL) is the Prevents secretion from ER element.

The protein belongs to the protein disulfide isomerase family. Interacts with CNE1 and EPS1.

The protein localises to the endoplasmic reticulum lumen. It carries out the reaction Catalyzes the rearrangement of -S-S- bonds in proteins.. Its function is as follows. Participates in the folding of proteins containing disulfide bonds. In Saccharomyces cerevisiae (strain ATCC 204508 / S288c) (Baker's yeast), this protein is Protein disulfide-isomerase MPD1 (MPD1).